Consider the following 197-residue polypeptide: Ion-translocating oxidoreductase complex subunit B (197 aa).

A hydrophobic region spans residues 1–26 (MSIVIIAVLALSALALTFGAVLGFAS). The 4Fe-4S domain occupies 32-90 (EGNPIVDQIDGLLPQTQCGQCGYPGCRPYAEAIANGDAINKCPPGGEATITALADLLDV). [4Fe-4S] cluster is bound by residues C49, C52, C57, C73, C115, C118, C121, C125, C145, C148, C151, and C155. 4Fe-4S ferredoxin-type domains lie at 106–135 (QVAYIREDECIGCTKCIQACPVDAILGAAK) and 136–165 (QMHTVIVSECTGCDLCVEPCPVDCIDMIPA).

It belongs to the 4Fe4S bacterial-type ferredoxin family. RnfB subfamily. The complex is composed of six subunits: RnfA, RnfB, RnfC, RnfD, RnfE and RnfG. The cofactor is [4Fe-4S] cluster.

It localises to the cell inner membrane. Part of a membrane-bound complex that couples electron transfer with translocation of ions across the membrane. This is Ion-translocating oxidoreductase complex subunit B from Hahella chejuensis (strain KCTC 2396).